The primary structure comprises 132 residues: Agouti-signaling protein (132 aa).

The N-terminal stretch at 1 to 22 is a signal peptide; sequence MDVTRLLLATLLVFLCFFTAYS. N-linked (GlcNAc...) asparagine glycosylation is present at Asn39. The disordered stretch occupies residues 61–87; sequence QISRKEAEKKRSSKKEASMKKVARPRT. Positions 63–79 are enriched in basic and acidic residues; that stretch reads SRKEAEKKRSSKKEASM. 5 cysteine pairs are disulfide-bonded: Cys93–Cys108, Cys100–Cys114, Cys107–Cys125, Cys111–Cys132, and Cys116–Cys123. The 40-residue stretch at 93–132 folds into the Agouti domain; that stretch reads CVTTRDSCKPPAPACCDPCASCQCRFFRSACSCRVLSLNC.

Its subcellular location is the secreted. Involved in the regulation of melanogenesis. The binding of ASP to MC1R precludes alpha-MSH initiated signaling and thus blocks production of cAMP, leading to a down-regulation of eumelanogenesis (brown/black pigment) and thus increasing synthesis of pheomelanin (yellow/red pigment). This is Agouti-signaling protein (ASIP) from Macaca silenus (Lion-tailed macaque).